The chain runs to 100 residues: MNLTPREKDKLLIAMAAIVARRRLERGVKLNHPEAVALITDFVVEGARDGRPVAELMEAGAHVITRDQVMEGVAEMIHDIQVEATFPDGTKLVTVHEPIR.

It belongs to the urease gamma subunit family. In terms of assembly, heterotrimer of UreA (gamma), UreB (beta) and UreC (alpha) subunits. Three heterotrimers associate to form the active enzyme.

The protein localises to the cytoplasm. It catalyses the reaction urea + 2 H2O + H(+) = hydrogencarbonate + 2 NH4(+). The protein operates within nitrogen metabolism; urea degradation; CO(2) and NH(3) from urea (urease route): step 1/1. The chain is Urease subunit gamma from Chelativorans sp. (strain BNC1).